Reading from the N-terminus, the 389-residue chain is Migration and invasion-inhibitory protein (389 aa).

Residues 44 to 54 (LDYSSSSNNLE) show a composition bias toward low complexity. Disordered stretches follow at residues 44-80 (LDYS…WDPL) and 131-150 (KRPV…AQVP). A compositionally biased stretch (polar residues) spans 58–70 (SQETSASSVAPNS). The span at 71–80 (QDKRHVWDPL) shows a compositional bias: basic and acidic residues. At Ser309 the chain carries Phosphoserine.

Interacts with IGFBP2.

Inhibits glioma cells invasion and down-regulates adhesion- and motility-associated genes such as NFKB2 and ICAM1. Exhibits opposing effects to IGFBP2 on cell invasion. The protein is Migration and invasion-inhibitory protein (Miip) of Rattus norvegicus (Rat).